Here is a 27-residue protein sequence, read N- to C-terminus: Conotoxin (27 aa).

3 cysteine pairs are disulfide-bonded: C2-C16, C6-C18, and C12-C23. Position 27 is an asparagine amide (N27).

Expressed by the venom duct.

It is found in the secreted. In terms of biological role, probable neurotoxin that inhibits ion channels. The sequence is that of Conotoxin from Conus amadis (Amadis cone).